A 963-amino-acid chain; its full sequence is Iron-responsive element-binding protein 2 (963 aa).

3 residues coordinate [4Fe-4S] cluster: C512, C578, and C581.

The protein belongs to the aconitase/IPM isomerase family. Interacts with RBCK1 only in iron-rich conditions. Interacts (when associated with the 4Fe-4S) with FBXL5. Interacts with CIAO1 and CIAO2A. The cofactor is [4Fe-4S] cluster. Post-translationally, ubiquitinated and degraded by the proteasome in presence of high level of iron and oxygen. Ubiquitinated by a SCF complex containing FBXL5. Upon iron and oxygen depletion FBXL5 is degraded, preventing ubiquitination and allowing its RNA-binding activity.

The protein localises to the cytoplasm. Its function is as follows. RNA-binding protein that binds to iron-responsive elements (IRES), which are stem-loop structures found in the 5'-UTR of ferritin, and delta aminolevulinic acid synthase mRNAs, and in the 3'-UTR of transferrin receptor mRNA. Binding to the IRE element in ferritin results in the repression of its mRNA translation. Binding of the protein to the transferrin receptor mRNA inhibits the degradation of this otherwise rapidly degraded mRNA. This is Iron-responsive element-binding protein 2 (Ireb2) from Mus musculus (Mouse).